The chain runs to 148 residues: 3-hydroxyacyl-[acyl-carrier-protein] dehydratase FabZ (148 aa).

The active site involves histidine 48.

This sequence belongs to the thioester dehydratase family. FabZ subfamily.

The protein resides in the cytoplasm. It catalyses the reaction a (3R)-hydroxyacyl-[ACP] = a (2E)-enoyl-[ACP] + H2O. Functionally, involved in unsaturated fatty acids biosynthesis. Catalyzes the dehydration of short chain beta-hydroxyacyl-ACPs and long chain saturated and unsaturated beta-hydroxyacyl-ACPs. This is 3-hydroxyacyl-[acyl-carrier-protein] dehydratase FabZ from Campylobacter curvus (strain 525.92).